Reading from the N-terminus, the 302-residue chain is Protein FdhE homolog (302 aa).

This sequence belongs to the FdhE family.

It is found in the cytoplasm. Necessary for formate dehydrogenase activity. The chain is Protein FdhE homolog from Haemophilus influenzae (strain PittGG).